The primary structure comprises 89 residues: Large ribosomal subunit protein eL43 (89 aa).

Zn(2+) contacts are provided by C38, C41, C56, and C59. A C4-type zinc finger spans residues 38 to 59 (CPVCHKRAVKRVGTGIWRCTKC).

The protein belongs to the eukaryotic ribosomal protein eL43 family. Putative zinc-binding subfamily. In terms of assembly, part of the 50S ribosomal subunit. Zn(2+) is required as a cofactor.

Binds to the 23S rRNA. The polypeptide is Large ribosomal subunit protein eL43 (Methanopyrus kandleri (strain AV19 / DSM 6324 / JCM 9639 / NBRC 100938)).